The primary structure comprises 388 residues: Chorismate synthase (388 aa).

Positions 40 and 46 each coordinate NADP(+). FMN-binding positions include 131 to 133 (RSS), 252 to 253 (NA), Gly-296, 311 to 315 (KPIPT), and Arg-337.

This sequence belongs to the chorismate synthase family. As to quaternary structure, homotetramer. FMNH2 is required as a cofactor.

It carries out the reaction 5-O-(1-carboxyvinyl)-3-phosphoshikimate = chorismate + phosphate. The protein operates within metabolic intermediate biosynthesis; chorismate biosynthesis; chorismate from D-erythrose 4-phosphate and phosphoenolpyruvate: step 7/7. Catalyzes the anti-1,4-elimination of the C-3 phosphate and the C-6 proR hydrogen from 5-enolpyruvylshikimate-3-phosphate (EPSP) to yield chorismate, which is the branch point compound that serves as the starting substrate for the three terminal pathways of aromatic amino acid biosynthesis. This reaction introduces a second double bond into the aromatic ring system. The protein is Chorismate synthase of Limosilactobacillus fermentum (strain NBRC 3956 / LMG 18251) (Lactobacillus fermentum).